Consider the following 937-residue polypeptide: Molybdenum cofactor sulfurase (937 aa).

Residue K237 is modified to N6-(pyridoxal phosphate)lysine. C397 is an active-site residue. Disordered regions lie at residues 633–710 (GQGK…RRIL), 756–795 (PSPSTPSASPSNPLTPSPSPSTTSKPTPKPKQKPKQKLNP), and 897–921 (KEGTGMGMGTGTGTGTGTRSMGGNG). Positions 638-652 (MTRHAKAHLQRHQHQ) are enriched in basic residues. The region spanning 682–935 (TPPSPPDSDT…VRVGDVVRPS (254 aa)) is the MOSC domain. Residues 756–767 (PSPSTPSASPSN) are compositionally biased toward low complexity. Residues 900–921 (TGMGMGTGTGTGTGTRSMGGNG) show a composition bias toward gly residues.

This sequence belongs to the class-V pyridoxal-phosphate-dependent aminotransferase family. MOCOS subfamily. Requires pyridoxal 5'-phosphate as cofactor.

The enzyme catalyses Mo-molybdopterin + L-cysteine + AH2 = thio-Mo-molybdopterin + L-alanine + A + H2O. It participates in cofactor biosynthesis; molybdopterin biosynthesis. Its function is as follows. Sulfurates the molybdenum cofactor. Sulfation of molybdenum is essential for xanthine dehydrogenase (XDH) and aldehyde oxidase (ADO) enzymes in which molybdenum cofactor is liganded by 1 oxygen and 1 sulfur atom in active form. This chain is Molybdenum cofactor sulfurase (nit-13), found in Neurospora crassa (strain ATCC 24698 / 74-OR23-1A / CBS 708.71 / DSM 1257 / FGSC 987).